The primary structure comprises 62 residues: Endoregulin (62 aa).

A helical transmembrane segment spans residues Leu25–Phe45.

Homooligomer. Can also form heterooligomers with other sarcoplasmic/endoplasmic reticulum calcium ATPase (SERCA) regulators ARLN, PLN, SLN and STRIT1/DWORF. Monomer. Interacts as a monomer with ATP2A2/SERCA2; the interaction results in inhibition of ATP2A2 Ca(2+) affinity.

The protein resides in the endoplasmic reticulum membrane. Inhibits the activity of the calcium ATPases ATP2A2/SERCA2 and ATP2A3/SERCA3 by decreasing their apparent affinity for Ca(2+). In Homo sapiens (Human), this protein is Endoregulin.